The following is a 151-amino-acid chain: Prefoldin subunit alpha (151 aa).

A disordered region spans residues 120–151; that stretch reads TVEEETASLEEKAQQAQQQQMQQLQQMQQEDE. Residues 133–151 show a composition bias toward low complexity; the sequence is QQAQQQQMQQLQQMQQEDE.

The protein belongs to the prefoldin subunit alpha family. In terms of assembly, heterohexamer of two alpha and four beta subunits.

It localises to the cytoplasm. Its function is as follows. Molecular chaperone capable of stabilizing a range of proteins. Seems to fulfill an ATP-independent, HSP70-like function in archaeal de novo protein folding. The protein is Prefoldin subunit alpha of Natronomonas pharaonis (strain ATCC 35678 / DSM 2160 / CIP 103997 / JCM 8858 / NBRC 14720 / NCIMB 2260 / Gabara) (Halobacterium pharaonis).